Reading from the N-terminus, the 545-residue chain is CTP synthase (545 aa).

The tract at residues 1–266 (MATNYIFVTG…DDIVTKRFNL (266 aa)) is amidoligase domain. Serine 14 lines the CTP pocket. Serine 14 contributes to the UTP binding site. ATP is bound by residues 15–20 (SLGKGI) and aspartate 72. Residues aspartate 72 and glutamate 140 each coordinate Mg(2+). CTP contacts are provided by residues 147–149 (DIE), 187–192 (KTKPTQ), and lysine 223. Residues 187-192 (KTKPTQ) and lysine 223 each bind UTP. 239–241 (RDV) serves as a coordination point for ATP. Residues 291–542 (TVGFVGKYVE…IEAAGEFHKE (252 aa)) enclose the Glutamine amidotransferase type-1 domain. An L-glutamine-binding site is contributed by glycine 352. The active-site Nucleophile; for glutamine hydrolysis is the cysteine 379. Residues 380-383 (LGMQ), glutamate 403, and arginine 470 each bind L-glutamine. Catalysis depends on residues histidine 515 and glutamate 517.

This sequence belongs to the CTP synthase family. As to quaternary structure, homotetramer.

It carries out the reaction UTP + L-glutamine + ATP + H2O = CTP + L-glutamate + ADP + phosphate + 2 H(+). The enzyme catalyses L-glutamine + H2O = L-glutamate + NH4(+). It catalyses the reaction UTP + NH4(+) + ATP = CTP + ADP + phosphate + 2 H(+). It functions in the pathway pyrimidine metabolism; CTP biosynthesis via de novo pathway; CTP from UDP: step 2/2. Allosterically activated by GTP, when glutamine is the substrate; GTP has no effect on the reaction when ammonia is the substrate. The allosteric effector GTP functions by stabilizing the protein conformation that binds the tetrahedral intermediate(s) formed during glutamine hydrolysis. Inhibited by the product CTP, via allosteric rather than competitive inhibition. Catalyzes the ATP-dependent amination of UTP to CTP with either L-glutamine or ammonia as the source of nitrogen. Regulates intracellular CTP levels through interactions with the four ribonucleotide triphosphates. The sequence is that of CTP synthase from Idiomarina loihiensis (strain ATCC BAA-735 / DSM 15497 / L2-TR).